A 554-amino-acid polypeptide reads, in one-letter code: CTP synthase (554 aa).

The tract at residues 1–270 is amidoligase domain; it reads MTKFVFVTGG…DGLICDKLRL (270 aa). Ser13 serves as a coordination point for CTP. A UTP-binding site is contributed by Ser13. ATP contacts are provided by residues 14-19 and Asp71; that span reads SLGKGI. The Mg(2+) site is built by Asp71 and Glu144. Residues 151-153, 191-196, and Lys227 each bind CTP; these read DIE and KTKPTQ. Residues 191–196 and Lys227 each bind UTP; that span reads KTKPTQ. The region spanning 295-548 is the Glutamine amidotransferase type-1 domain; it reads TVAMVGKYVD…IAAAKARHQA (254 aa). Gly357 lines the L-glutamine pocket. The Nucleophile; for glutamine hydrolysis role is filled by Cys384. L-glutamine is bound by residues 385-388, Glu408, and Arg474; that span reads LGMQ. Residues His521 and Glu523 contribute to the active site.

Belongs to the CTP synthase family. In terms of assembly, homotetramer.

The enzyme catalyses UTP + L-glutamine + ATP + H2O = CTP + L-glutamate + ADP + phosphate + 2 H(+). It carries out the reaction L-glutamine + H2O = L-glutamate + NH4(+). The catalysed reaction is UTP + NH4(+) + ATP = CTP + ADP + phosphate + 2 H(+). Its pathway is pyrimidine metabolism; CTP biosynthesis via de novo pathway; CTP from UDP: step 2/2. Its activity is regulated as follows. Allosterically activated by GTP, when glutamine is the substrate; GTP has no effect on the reaction when ammonia is the substrate. The allosteric effector GTP functions by stabilizing the protein conformation that binds the tetrahedral intermediate(s) formed during glutamine hydrolysis. Inhibited by the product CTP, via allosteric rather than competitive inhibition. Catalyzes the ATP-dependent amination of UTP to CTP with either L-glutamine or ammonia as the source of nitrogen. Regulates intracellular CTP levels through interactions with the four ribonucleotide triphosphates. The chain is CTP synthase from Verminephrobacter eiseniae (strain EF01-2).